We begin with the raw amino-acid sequence, 361 residues long: dTDP-glucose 4,6-dehydratase (361 aa).

NAD(+) is bound by residues 11 to 12, 32 to 35, 58 to 59, 80 to 84, and Thr99; these read FI, DKLT, DI, and LAAES. Ser84 lines the substrate pocket. Thr133 contacts substrate. Asp134 serves as the catalytic Proton donor. Residues Glu135 and Tyr167 each act as proton acceptor in the active site. An NAD(+)-binding site is contributed by 167 to 171; it reads YSASK. Asn196 serves as a coordination point for substrate. Asn197 contributes to the NAD(+) binding site. Residues 206–207, 222–224, Arg231, Asn266, and 296–300 each bind substrate; these read KL, PIY, and DRPGH.

It belongs to the NAD(P)-dependent epimerase/dehydratase family. dTDP-glucose dehydratase subfamily. Homodimer. NAD(+) is required as a cofactor.

It catalyses the reaction dTDP-alpha-D-glucose = dTDP-4-dehydro-6-deoxy-alpha-D-glucose + H2O. It participates in carbohydrate biosynthesis; dTDP-L-rhamnose biosynthesis. It functions in the pathway bacterial outer membrane biogenesis; LPS O-antigen biosynthesis. Catalyzes the dehydration of dTDP-D-glucose to form dTDP-6-deoxy-D-xylo-4-hexulose via a three-step process involving oxidation, dehydration and reduction. The chain is dTDP-glucose 4,6-dehydratase (rfbB) from Shigella flexneri.